The primary structure comprises 349 residues: 3'-5' exoribonuclease 1 (349 aa).

Composition is skewed to basic and acidic residues over residues 1–10 (MEDPQSKEPA) and 22–35 (PRPEGGEEPPRPSP). Residues 1 to 48 (MEDPQSKEPAGEAVALALLESPRPEGGEEPPRPSPEETQQCKFDGQET) are disordered. A phosphoserine mark is found at Ser-59 and Ser-62. An SAP domain is found at 76-110 (INRMSKEELRAKLSEFKLETRGVKDVLKKRLKNYY). In terms of domain architecture, Exonuclease spans 130-306 (ICIIDFEATC…DDSKNIARIA (177 aa)). 2 residues coordinate Mg(2+): Asp-134 and Glu-136. The active-site Proton acceptor is Glu-136. AMP contacts are provided by Glu-136 and Ala-137. A Mg(2+)-binding site is contributed by Asp-234. Residue His-293 is the Proton acceptor of the active site. His-293 provides a ligand contact to AMP. A Mg(2+)-binding site is contributed by Asp-298.

Identified in a histone pre-mRNA complex, at least composed of ERI1, LSM11, SLBP, SNRPB, SYNCRIP and YBX1. Interacts in a cooperative manner with SLBP to the mature 3'-end of histone mRNAs. Binds to 40S and 60S ribosomal subunits and to 80S assembled ribosomes. Found in a ternary complex with SLBP and the stem-loop structure of the 3'-end of histone mRNAs. Mg(2+) is required as a cofactor.

The protein localises to the cytoplasm. It localises to the nucleus. The protein resides in the nucleolus. The enzyme catalyses Exonucleolytic cleavage in the 3'- to 5'-direction to yield nucleoside 5'-phosphates.. Although it can bind simultaneously with SLBP to the 3'-end of histone mRNA, the presence of SLBP prevents the exonuclease activity. Its function is as follows. RNA exonuclease that binds to the 3'-end of histone mRNAs and degrades them, suggesting that it plays an essential role in histone mRNA decay after replication. A 2' and 3'-hydroxyl groups at the last nucleotide of the histone 3'-end is required for efficient 3'-end histone mRNA exonuclease activity and degradation of RNA substrates. Also able to degrade the 3'-overhangs of short interfering RNAs (siRNAs) in vitro, suggesting a possible role as regulator of RNA interference (RNAi). Required for binding the 5'-ACCCA-3' sequence present in stem-loop structure. Able to bind other mRNAs. Required for 5.8S rRNA 3'-end processing. Also binds to 5.8s ribosomal RNA. Binds with high affinity to the stem-loop structure of replication-dependent histone pre-mRNAs. In vitro, does not have sequence specificity. In vitro, has weak DNA exonuclease activity. In vitro, shows biphasic kinetics such that there is rapid hydrolysis of the last three unpaired RNA nucleotides in the 39 flanking sequence followed by a much slower cleavage through the stem that occurs over a longer incubation period in the order of hours. ERI1-mediated RNA metabolism plays a key role in chondrogenesis. The polypeptide is 3'-5' exoribonuclease 1 (Homo sapiens (Human)).